A 503-amino-acid chain; its full sequence is E3 ubiquitin-protein ligase ariadne-1 (503 aa).

A compositionally biased stretch (acidic residues) spans 1–11; the sequence is MDSDNDNDFCD. The segment at 1–40 is disordered; it reads MDSDNDNDFCDNVDSGNVSSGDDGDDDFGMEVDLPSSADR. The span at 12-21 shows a compositional bias: low complexity; that stretch reads NVDSGNVSSG. The segment at 129–340 is TRIAD supradomain; sequence QCEECEICFS…SSWYNCNRYD (212 aa). Zn(2+) is bound by residues Cys-133, Cys-136, Cys-150, His-152, Cys-155, Cys-158, Cys-178, Cys-183, Cys-223, Cys-228, Cys-244, Cys-246, Cys-251, Cys-254, His-259, Cys-264, Cys-291, and Cys-294. An RING-type 1 zinc finger spans residues 133 to 183; the sequence is CEICFSQLPPDSMAGLECGHRFCMPCWHEYLSTKIVAEGLGQTISCAAHGC. Residues 133–201 form an important for interaction with Ubc10 region; the sequence is CEICFSQLPP…VANLVTDARV (69 aa). The IBR-type zinc finger occupies 203–264; it reads VKYQQLITNS…GENWHDPVKC (62 aa). Residues 291-322 form an RING-type 2; atypical zinc finger; sequence CPRCSVTIEKDGGCNHMVCKNQNCKNEFCWVC. Cys-304 is a catalytic residue. The Zn(2+) site is built by Cys-309, Cys-314, Cys-319, Cys-322, His-329, and Cys-336. Positions 341-361 form a coiled coil; the sequence is EDEAKTARDAQEKLRSSLARY.

The protein belongs to the RBR family. Ariadne subfamily. Can form homodimers. Interacts (via RING-type 1 zinc finger) with Ubc10. Interacts with the LINC complex member koi. Interacts with park. Interacts with ari-2. Specifically interacts with isoform ECR-A of EcR. Autophosphorylated. Widely expressed, with prominent levels in the nervous system and female gonads.

It is found in the cytoplasm. Its subcellular location is the nucleus. It carries out the reaction [E2 ubiquitin-conjugating enzyme]-S-ubiquitinyl-L-cysteine + [acceptor protein]-L-lysine = [E2 ubiquitin-conjugating enzyme]-L-cysteine + [acceptor protein]-N(6)-ubiquitinyl-L-lysine.. In terms of biological role, atypical E3 ubiquitin-protein ligase, which catalyzes ubiquitination of target proteins together with ubiquitin-conjugating enzyme E2 Ubc10. Controls the subcellular localization and morphology of muscle nuclei (myonuclei) by regulating the protein levels and distribution of the LINC (LInker of Nucleoskeleton and Cytoskeleton) complex. Functions by mediating the monoubiquitination of the LINC complex subunit koi leading to its subsequent proteasomal degradation. Appears to function, at least partially redundantly, with the RBR E3 ligase family member park in nuclear localization and morphology. Likely to function in metamorphosis by regulating the proteins levels of EcR isoform A (ECR-A) and its heterodimeric partner usp, via the ubiquitination and subsequent degradation of ECR-A. This chain is E3 ubiquitin-protein ligase ariadne-1, found in Drosophila melanogaster (Fruit fly).